The chain runs to 592 residues: Aspartate--tRNA(Asp/Asn) ligase (592 aa).

An L-aspartate-binding site is contributed by Glu-173. The interval 197-200 (QLFK) is aspartate. Arg-219 lines the L-aspartate pocket. Residues 219-221 (RDE) and Gln-228 each bind ATP. His-448 lines the L-aspartate pocket. Glu-481 provides a ligand contact to ATP. Arg-488 contributes to the L-aspartate binding site. 533–536 (GLDR) contacts ATP.

The protein belongs to the class-II aminoacyl-tRNA synthetase family. Type 1 subfamily. Homodimer.

The protein resides in the cytoplasm. The enzyme catalyses tRNA(Asx) + L-aspartate + ATP = L-aspartyl-tRNA(Asx) + AMP + diphosphate. In terms of biological role, aspartyl-tRNA synthetase with relaxed tRNA specificity since it is able to aspartylate not only its cognate tRNA(Asp) but also tRNA(Asn). Reaction proceeds in two steps: L-aspartate is first activated by ATP to form Asp-AMP and then transferred to the acceptor end of tRNA(Asp/Asn). In Chromohalobacter salexigens (strain ATCC BAA-138 / DSM 3043 / CIP 106854 / NCIMB 13768 / 1H11), this protein is Aspartate--tRNA(Asp/Asn) ligase.